Reading from the N-terminus, the 158-residue chain is Ribosome maturation factor RimP (158 aa).

It belongs to the RimP family.

The protein resides in the cytoplasm. Its function is as follows. Required for maturation of 30S ribosomal subunits. In Lactobacillus gasseri (strain ATCC 33323 / DSM 20243 / BCRC 14619 / CIP 102991 / JCM 1131 / KCTC 3163 / NCIMB 11718 / NCTC 13722 / AM63), this protein is Ribosome maturation factor RimP.